The primary structure comprises 483 residues: MHRLTLAQIARGLAAKEFSSVELSEALLARIAELDPGLNSFITVTAEQALEQARAADARRAAGESGALLGAPIAHKDLFCTKGVRTSCASKILDDFIAPYDATVVERLAAAGCVSLGKLNMDEFAMGSASESSHYGPVRNPWNTECVPGGSSGGSAAAVAARLVPAATGSDTGGSIRQPAALTNLTGLKPTYGRVSRWGMIAYASSLDQGGPLARSAEDCALLLSAMAGFDPKDSTCVDQPVDDYLAALHRPLAGLRIGLPREYFGAGLDPRLSDAVMACVEELKKLGATVKEIGLPSMQHAIPAYYVIAPAEASSNLSRFDGVRFGYRCENPQSLEDLYKRSRGEGFGAEVKRRIMVGTYALSAGYYDAYYLKAQKIRRLIRSDFIGAFQEVDLILGPTTPNPAWKLGEKGDDPVAAYLEDIYTITANLAGIPGLSMPAGFVDGLPVGVQLLAPYFQESRLLNVAHQYQQATDWHQRAPEGY.

Catalysis depends on charge relay system residues K76 and S151. S175 acts as the Acyl-ester intermediate in catalysis.

The protein belongs to the amidase family. GatA subfamily. Heterotrimer of A, B and C subunits.

It carries out the reaction L-glutamyl-tRNA(Gln) + L-glutamine + ATP + H2O = L-glutaminyl-tRNA(Gln) + L-glutamate + ADP + phosphate + H(+). Functionally, allows the formation of correctly charged Gln-tRNA(Gln) through the transamidation of misacylated Glu-tRNA(Gln) in organisms which lack glutaminyl-tRNA synthetase. The reaction takes place in the presence of glutamine and ATP through an activated gamma-phospho-Glu-tRNA(Gln). This is Glutamyl-tRNA(Gln) amidotransferase subunit A from Azotobacter vinelandii (strain DJ / ATCC BAA-1303).